Here is a 934-residue protein sequence, read N- to C-terminus: AP-2 complex subunit alpha (934 aa).

Residues 623 to 670 (RVPENAEIRETKSPVPNSHNNAHSNAQTNHTSSANNANASSDLLGLST) form a disordered region. Polar residues predominate over residues 636-645 (PVPNSHNNAH). Residues 646–663 (SNAQTNHTSSANNANASS) show a composition bias toward low complexity.

This sequence belongs to the adapter complexes large subunit family. In terms of assembly, adaptor protein complex 2 (AP-2) is a heterotetramer composed of two large adaptins (alpha-type and beta-type subunits), a medium adaptin (mu-type subunit AP50) and a small adaptin (sigma-type subunit AP17).

Its subcellular location is the cell membrane. It localises to the membrane. The protein localises to the coated pit. Its function is as follows. Adaptins are components of the adapter complexes which link clathrin to receptors in coated vesicles. Clathrin-associated protein complexes are believed to interact with the cytoplasmic tails of membrane proteins, leading to their selection and concentration. Alpha adaptin is a subunit of the plasma membrane adapter. This is AP-2 complex subunit alpha from Anopheles gambiae (African malaria mosquito).